The sequence spans 290 residues: HTH-type transcriptional activator RhaR (290 aa).

In terms of domain architecture, HTH araC/xylS-type spans Asp-179–Arg-277. 2 DNA-binding regions (H-T-H motif) span residues Ala-196–Thr-217 and Ile-244–Ala-267.

Binds DNA as a dimer.

The protein localises to the cytoplasm. Its function is as follows. Activates expression of the rhaSR operon in response to L-rhamnose. This is HTH-type transcriptional activator RhaR from Yersinia pestis bv. Antiqua (strain Antiqua).